Reading from the N-terminus, the 542-residue chain is Putative sodium-dependent excitatory amino acid transporter glt-6 (542 aa).

Over 1–15 the chain is Cytoplasmic; it reads MKSKRRDDIVQFCRE. A run of 3 helical transmembrane segments spans residues 16-36, 55-75, and 93-113; these read NTLL…GFGL, IFMQ…LISA, and LYYL…VTVI. Residues 114–191 lie on the Extracellular side of the membrane; it reads HPGDPSIKGT…IVKRSIGMTK (78 aa). A glycan (N-linked (GlcNAc...) asparagine) is linked at Asn175. 5 consecutive transmembrane segments (helical) span residues 192–212, 234–254, 265–285, 303–323, and 386–406; these read GMNI…ISQL, VVTL…GNLL, VLAL…IITV, GMIQ…TLPM, and TIAS…LLIL. The segment covering 505 to 517 has biased composition (low complexity); that stretch reads RIGSRIGSRRPSS. Positions 505 to 542 are disordered; it reads RIGSRIGSRRPSSTNLHLSWRNNNIEPPYTPLPNDENV. Polar residues predominate over residues 518 to 529; that stretch reads TNLHLSWRNNNI.

This sequence belongs to the dicarboxylate/amino acid:cation symporter (DAACS) (TC 2.A.23) family.

It is found in the membrane. This is Putative sodium-dependent excitatory amino acid transporter glt-6 (glt-6) from Caenorhabditis elegans.